The sequence spans 161 residues: Afimbrial adhesin AFA-I (161 aa).

An N-terminal signal peptide occupies residues 1 to 21; the sequence is MKKLAIIGATSVMMMTGTAQA.

It belongs to the Dr-adhesin family.

The protein resides in the fimbrium. Functionally, hemagglutinins of uropathogenic E.coli mediate adherence to the upper urinary tract. These adhesins bind to the Dr blood group antigen and also agglutinate human erythrocytes in the presence of D-mannose (mannose-resistant hemagglutination (MRHA)). This is Afimbrial adhesin AFA-I (afaE1) from Escherichia coli.